The sequence spans 250 residues: uncharacterized protein (250 aa).

Residues glutamate 97, glutamate 99, and aspartate 128 each contribute to the a divalent metal cation site.

The protein belongs to the FAH family.

This is an uncharacterized protein from Archaeoglobus fulgidus (strain ATCC 49558 / DSM 4304 / JCM 9628 / NBRC 100126 / VC-16).